A 383-amino-acid chain; its full sequence is Lipid-A-disaccharide synthase (383 aa).

The protein belongs to the LpxB family.

It catalyses the reaction 2-N,3-O-bis[(3R)-3-hydroxytetradecanoyl]-alpha-D-glucosaminyl 1-phosphate + UDP-2-N,3-O-bis[(3R)-3-hydroxytetradecanoyl]-alpha-D-glucosamine = lipid A disaccharide (E. coli) + UDP + H(+). The enzyme catalyses a lipid X + a UDP-2-N,3-O-bis[(3R)-3-hydroxyacyl]-alpha-D-glucosamine = a lipid A disaccharide + UDP + H(+). The protein operates within glycolipid biosynthesis; lipid IV(A) biosynthesis; lipid IV(A) from (3R)-3-hydroxytetradecanoyl-[acyl-carrier-protein] and UDP-N-acetyl-alpha-D-glucosamine: step 5/6. Its function is as follows. Condensation of UDP-2,3-diacylglucosamine and 2,3-diacylglucosamine-1-phosphate to form lipid A disaccharide, a precursor of lipid A, a phosphorylated glycolipid that anchors the lipopolysaccharide to the outer membrane of the cell. This Klebsiella pneumoniae (strain 342) protein is Lipid-A-disaccharide synthase.